A 199-amino-acid chain; its full sequence is MLIKILYIIITYLCGSIPSAYIVAKANGKVDIRTVGSGNSGATNVFREIGKCAGVITLIADILKGFIPVYFATFIDNSFSYSVAVAAAAMVGHVFTIFLKFKGGKGVATGLGVFFALMRWPSLIALAIFGLAFVFSRYVSLGSICAVISLPLTSYFLGYSTEVVIFTFAITLLIIYRHRTNIKRLIERSENKLRIFKKK.

Helical transmembrane passes span I3 to V23, V55 to I75, F79 to L99, V113 to F133, and Y155 to I175.

This sequence belongs to the PlsY family. Probably interacts with PlsX.

It localises to the cell inner membrane. It catalyses the reaction an acyl phosphate + sn-glycerol 3-phosphate = a 1-acyl-sn-glycero-3-phosphate + phosphate. It functions in the pathway lipid metabolism; phospholipid metabolism. In terms of biological role, catalyzes the transfer of an acyl group from acyl-phosphate (acyl-PO(4)) to glycerol-3-phosphate (G3P) to form lysophosphatidic acid (LPA). This enzyme utilizes acyl-phosphate as fatty acyl donor, but not acyl-CoA or acyl-ACP. In Endomicrobium trichonymphae, this protein is Glycerol-3-phosphate acyltransferase.